A 450-amino-acid chain; its full sequence is UDP-N-acetylmuramoylalanine--D-glutamate ligase (450 aa).

Position 119–125 (G119–T125) interacts with ATP.

It belongs to the MurCDEF family.

The protein resides in the cytoplasm. It catalyses the reaction UDP-N-acetyl-alpha-D-muramoyl-L-alanine + D-glutamate + ATP = UDP-N-acetyl-alpha-D-muramoyl-L-alanyl-D-glutamate + ADP + phosphate + H(+). The protein operates within cell wall biogenesis; peptidoglycan biosynthesis. Functionally, cell wall formation. Catalyzes the addition of glutamate to the nucleotide precursor UDP-N-acetylmuramoyl-L-alanine (UMA). In Bacillus cereus (strain ATCC 10987 / NRS 248), this protein is UDP-N-acetylmuramoylalanine--D-glutamate ligase.